The primary structure comprises 74 residues: Antimicrobial peptide HsAp2 (74 aa).

A signal peptide spans 1 to 21; that stretch reads MSRRLILILVLVAMLVKTMAG. The propeptide occupies 22-33; the sequence is MESKWVETTYEI. Pro65 carries the post-translational modification Proline amide. A propeptide spanning residues 69–74 is cleaved from the precursor; sequence AISEQT.

Belongs to the non-disulfide-bridged peptide (NDBP) superfamily. Medium-length antimicrobial peptide (group 3) family. In terms of tissue distribution, expressed by the venom gland.

The protein localises to the secreted. It is found in the target cell membrane. Functionally, possesses antimicrobial activity against both Gram-negative and Gram-positive bacteria, as well as against the fungus C.tropicalis. Also possesses a relatively high hemolytic activity. May act by disrupting the integrity of the bacterial cell membrane. The protein is Antimicrobial peptide HsAp2 of Heterometrus spinifer (Asia giant forest scorpion).